The following is a 336-amino-acid chain: Glycerol-3-phosphate dehydrogenase [NAD(P)+] (336 aa).

Residues Ser14, Trp15, Arg35, Arg36, and Lys109 each coordinate NADPH. Positions 109 and 139 each coordinate sn-glycerol 3-phosphate. Ala143 provides a ligand contact to NADPH. Lys194, Asp247, Ser257, Arg258, and Asn259 together coordinate sn-glycerol 3-phosphate. Lys194 serves as the catalytic Proton acceptor. Arg258 serves as a coordination point for NADPH. Glu284 is a binding site for NADPH.

Belongs to the NAD-dependent glycerol-3-phosphate dehydrogenase family.

It localises to the cytoplasm. The catalysed reaction is sn-glycerol 3-phosphate + NAD(+) = dihydroxyacetone phosphate + NADH + H(+). It catalyses the reaction sn-glycerol 3-phosphate + NADP(+) = dihydroxyacetone phosphate + NADPH + H(+). It functions in the pathway membrane lipid metabolism; glycerophospholipid metabolism. In terms of biological role, catalyzes the reduction of the glycolytic intermediate dihydroxyacetone phosphate (DHAP) to sn-glycerol 3-phosphate (G3P), the key precursor for phospholipid synthesis. This chain is Glycerol-3-phosphate dehydrogenase [NAD(P)+], found in Streptomyces coelicolor (strain ATCC BAA-471 / A3(2) / M145).